Here is a 287-residue protein sequence, read N- to C-terminus: ATP synthase gamma chain (287 aa).

The protein belongs to the ATPase gamma chain family. As to quaternary structure, F-type ATPases have 2 components, CF(1) - the catalytic core - and CF(0) - the membrane proton channel. CF(1) has five subunits: alpha(3), beta(3), gamma(1), delta(1), epsilon(1). CF(0) has three main subunits: a, b and c.

It is found in the cell inner membrane. Produces ATP from ADP in the presence of a proton gradient across the membrane. The gamma chain is believed to be important in regulating ATPase activity and the flow of protons through the CF(0) complex. In Xanthomonas oryzae pv. oryzae (strain MAFF 311018), this protein is ATP synthase gamma chain.